We begin with the raw amino-acid sequence, 375 residues long: Carbamoyl phosphate synthase small chain (375 aa).

Residues 1–185 (MTQPAILVLE…LNANAFVQAE (185 aa)) are CPSase. 3 residues coordinate L-glutamine: S47, G237, and G239. One can recognise a Glutamine amidotransferase type-1 domain in the interval 189–375 (KVVAYDYGVK…FVASMAEAKS (187 aa)). C265 serves as the catalytic Nucleophile. L-glutamine-binding residues include L266, Q269, N307, G309, and F310. Active-site residues include H349 and E351.

Belongs to the CarA family. As to quaternary structure, composed of two chains; the small (or glutamine) chain promotes the hydrolysis of glutamine to ammonia, which is used by the large (or ammonia) chain to synthesize carbamoyl phosphate. Tetramer of heterodimers (alpha,beta)4.

The catalysed reaction is hydrogencarbonate + L-glutamine + 2 ATP + H2O = carbamoyl phosphate + L-glutamate + 2 ADP + phosphate + 2 H(+). It catalyses the reaction L-glutamine + H2O = L-glutamate + NH4(+). The protein operates within amino-acid biosynthesis; L-arginine biosynthesis; carbamoyl phosphate from bicarbonate: step 1/1. It functions in the pathway pyrimidine metabolism; UMP biosynthesis via de novo pathway; (S)-dihydroorotate from bicarbonate: step 1/3. Its function is as follows. Small subunit of the glutamine-dependent carbamoyl phosphate synthetase (CPSase). CPSase catalyzes the formation of carbamoyl phosphate from the ammonia moiety of glutamine, carbonate, and phosphate donated by ATP, constituting the first step of 2 biosynthetic pathways, one leading to arginine and/or urea and the other to pyrimidine nucleotides. The small subunit (glutamine amidotransferase) binds and cleaves glutamine to supply the large subunit with the substrate ammonia. This is Carbamoyl phosphate synthase small chain from Xanthomonas campestris pv. campestris (strain ATCC 33913 / DSM 3586 / NCPPB 528 / LMG 568 / P 25).